Consider the following 141-residue polypeptide: Protein MGF 100-2L (141 aa).

It belongs to the asfivirus MGF 100 family.

Plays a role in virus cell tropism, and may be required for efficient virus replication in macrophages. This chain is Protein MGF 100-2L, found in African swine fever virus (isolate Pig/Kenya/KEN-50/1950) (ASFV).